Consider the following 558-residue polypeptide: Adenine deaminase (558 aa).

Belongs to the metallo-dependent hydrolases superfamily. Adenine deaminase family. The cofactor is Mn(2+).

The enzyme catalyses adenine + H2O + H(+) = hypoxanthine + NH4(+). In Deinococcus deserti (strain DSM 17065 / CIP 109153 / LMG 22923 / VCD115), this protein is Adenine deaminase.